Here is a 1486-residue protein sequence, read N- to C-terminus: MIERGKFRSLTLINWNGFFARTFDLDELVTTLSGGNGAGKSTTMAAFVTALIPDLTLLHFRNTTEAGATSGSRDKGLHGKLKAGVCYSMLDTINSRHQRVVVGVRLQQVAGRDRKVDIKPFAIQGLPMSVQPTQLVTETLNERQARVLPLNELKDKLEAMEGVQFKQFNSITDYHSLMFDLGIIARRLRSASDRSKFYRLIEASLYGGISSAITRSLRDYLLPENSGVRKAFQDMEAALRENRMTLEAIRVTQSDRDLFKHLISEATNYVAADYMRHANERRVHLDKALEFRRELHTSRQQLAAEQYKHVDMARELAEHNGAEGDLEADYQAASDHLNLVQTALRQQEKIERYEADLDELQIRLEEQNEVVAEAIERQEENEARAEAAELEVDELKSQLADYQQALDVQQTRAIQYNQAIAALNRAKELCHLPDLTADSAAEWLETFQAKELEATEKMLSLEQKMSMAQTAHSQFEQAYQLVVAINGPLARNEAWDVARELLREGVDQRHLAEQVQPLRMRLSELEQRLREQQEAERLLADFCKRQGKNFDIDELEALHQELEARIASLSDSVSNAREERMALRQEQEQLQSRIQSLMQRAPVWLAAQNSLNQLSEQCGEEFTSSQDVTEYLQQLLEREREAIVERDEVGARKNAVDEEIERLSQPGGSEDQRLNALAERFGGVLLSEIYDDVSLEDAPYFSALYGPSRHAIVVPDLSQVTEHLEGLTDCPEDLYLIEGDPQSFDDSVFSVDELEKAVVVKIADRQWRYSRFPEVPLFGRAARESRIESLHAEREVLSERFATLSFDVQKTQRLHQAFSRFIGSHLAVAFESDPEAEIRQLNSRRVELERALSNHENDNQQQRIQFEQAKEGVTALNRILPRLNLLADDSLADRVDEIRERLDEAQEAARFVQQFGNQLAKLEPIVSVLQSDPEQFEQLKEDYAYSQQMQRDARQQAFALTEVVQRRAHFSYSDSAEMLSGNSDLNEKLRERLEQAEAERTRAREALRGHAAQLSQYNQVLASLKSSYDTKKELLNDLQRELQDIGVRADSGAEERARIRRDELHAQLSNNRSRRNQLEKALTFCEAEMDNLTRKLRKLERDYFEMREQVVTAKAGWCAVMRMVKDNGVERRLHRRELAYLSADDLRSMSDKALGALRLAVADNEHLRDVLRMSEDPKRPERKIQFFVAVYQHLRERIRQDIIRTDDPVEAIEQMEIELSRLTEELTSREQKLAISSRSVANIIRKTIQREQNRIRMLNQGLQNVSFGQVNSVRLNVNVRETHAMLLDVLSEQHEQHQDLFNSNRLTFSEALAKLYQRLNPQIDMGQRTPQTIGEELLDYRNYLEMEVEVNRGSDGWLRAESGALSTGEAIGTGMSILVMVVQSWEDESRRLRGKDISPCRLLFLDEAARLDARSIATLFELCERLQMQLIIAAPENISPEKGTTYKLVRKVFQNTEHVHVVGLRGFAPQLPETLPGTDEAPSQAS.

34 to 41 (GGNGAGKS) serves as a coordination point for ATP. Coiled-coil stretches lie at residues 326-418 (LEAD…QYNQ), 444-480 (LETFQAKELEATEKMLSLEQKMSMAQTAHSQFEQAYQ), and 509-603 (RHLA…RAPV). The flexible hinge stretch occupies residues 666–783 (PGGSEDQRLN…EVPLFGRAAR (118 aa)). Coiled coils occupy residues 835 to 923 (EAEI…AKLE), 977 to 1115 (EMLS…TAKA), and 1209 to 1266 (VEAI…QNVS).

It belongs to the SMC family. MukB subfamily. As to quaternary structure, homodimerization via its hinge domain. Binds to DNA via its C-terminal region. Interacts, and probably forms a ternary complex, with MukE and MukF via its C-terminal region. The complex formation is stimulated by calcium or magnesium. Interacts with tubulin-related protein FtsZ.

The protein localises to the cytoplasm. It localises to the nucleoid. Functionally, plays a central role in chromosome condensation, segregation and cell cycle progression. Functions as a homodimer, which is essential for chromosome partition. Involved in negative DNA supercoiling in vivo, and by this means organize and compact chromosomes. May achieve or facilitate chromosome segregation by condensation DNA from both sides of a centrally located replisome during cell division. The chain is Chromosome partition protein MukB from Escherichia coli (strain ATCC 8739 / DSM 1576 / NBRC 3972 / NCIMB 8545 / WDCM 00012 / Crooks).